We begin with the raw amino-acid sequence, 1255 residues long: Period circadian protein homolog 2 (1255 aa).

The interval 1–79 (MNGYAEFPPS…EPPDARQSPD (79 aa)) is disordered. Over residues 35–56 (SSGSSGHETNENCSTGRDSQGS) the composition is skewed to polar residues. Positions 111–120 (LIKTLKELKV) match the Nuclear export signal 1 motif. A PAS 1 domain is found at 181–248 (VTSEHIVKNA…FHSFTSPYKL (68 aa)). The short motif at 308 to 312 (LCCLL) is the LXXLL element. The PAS 2 domain occupies 321-387 (YEAPRIPPEK…MLAIHKKILQ (67 aa)). One can recognise a PAC domain in the interval 395–438 (YSPIRFRARNGEYITLDTSWSSFINPWSRKISFIIGRHKVRVGP). Residues 462–471 (LTEQIHRLLL) carry the Nuclear export signal 2 motif. Disordered regions lie at residues 473-557 (PVPH…AVPA) and 617-646 (RSSDKRKATVSPGPHAGEAEPPSRVNSRTG). Residues 480–484 (SGYGS) are important for protein stability. The span at 504 to 516 (NGHEDSRRRRAEI) shows a compositional bias: basic and acidic residues. The interval 512 to 717 (RRAEICKNGN…ALACGLSQEK (206 aa)) is CSNK1E binding domain. Residues S527, S530, S533, and S540 each carry the phosphoserine modification. Basic and acidic residues predominate over residues 529–541 (YSHESGEQKKKSV). S662, S696, S700, S714, S766, and S771 each carry phosphoserine. Disordered stretches follow at residues 764–838 (ERSK…DTSQ) and 931–985 (FPSH…QSRS). A Nuclear localization signal motif is present at residues 789-805 (KKTGKNRKLKSKRVKPR). Positions 790-803 (KTGKNRKLKSKRVK) are enriched in basic residues. 2 stretches are compositionally biased toward polar residues: residues 829 to 838 (TAWSPSDTSQ) and 936 to 956 (TLTSEMASASQPEFPSRTSIP). The segment at 888–1071 (QFAVQPPPFP…NEDLCSASGS (184 aa)) is interaction with PPARG. At S945 the chain carries Phosphoserine. The segment covering 959-972 (PCACPATRATPPSA) has biased composition (low complexity). S977 carries the post-translational modification Phosphoserine. Positions 989-996 (LQLNLLQL) match the Nuclear export signal 3 motif. The disordered stretch occupies residues 1018 to 1050 (VGADCKPGTSRDQQPKAPLTRDEPSDTQNSDAL). An LXXLL motif is present at residues 1057–1061 (LNLLL). The tract at residues 1077–1106 (LGSGSLGCDASPSGAGSSDTSHTSKYFGSI) is disordered. Positions 1090-1106 (GAGSSDTSHTSKYFGSI) are enriched in polar residues. At S1124 the chain carries Phosphoserine. The interval 1155-1255 (SRNLEAVLKE…PLNHRIEEQT (101 aa)) is CRY binding domain. A disordered region spans residues 1231 to 1255 (GLSEVSDTKEDENGSPLNHRIEEQT).

As to quaternary structure, homodimer. Component of the circadian core oscillator, which includes the CRY proteins, CLOCK or NPAS2, BMAL1 or BMAL2, CSNK1D and/or CSNK1E, TIMELESS, and the PER proteins. Interacts with CLOCK-BMAL1 (off DNA). Interacts with BMAL2. Interacts directly with PER1 and PER3, and through a C-terminal domain, with CRY1 and CRY2. Interacts (via PAS 2 domain) with TIMELESS. Interacts with NFIL3. Different large complexes have been identified with different repressive functions. The core of PER complexes is composed of at least PER1, PER2, PER3, CRY1, CRY2, CSNK1D and/or CSNK1E. The large PER complex involved in the repression of transcriptional termination is composed of at least PER2, CDK9, DDX5, DHX9, NCBP1 and POLR2A (active). The large PER complex involved in the histone deacetylation is composed of at least HDAC1, PER2, SFPQ and SIN3A. The large PER complex involved in the histone methylation is composed of at least PER2, CBX3, TRIM28, SUV39H1 and/or SUV39H2; CBX3 mediates the formation of the complex. Interacts with SETX; the interaction inhibits termination of circadian target genes. Interacts with the nuclear receptors HNF4A, NR1D1, NR4A2, RORA, PPARA, PPARG and THRA; the interaction with at least PPARG is ligand dependent. Interacts with PML. Interacts (phosphorylated) with BTRC and FBXW11; the interactions trigger proteasomal degradation. Interacts with NONO and SFPQ. Interacts with CAVIN3. Interacts with MAGEL2. Interacts with MAP1LC3B. Interacts with HNF4A. Post-translationally, acetylated. Deacetylated by SIRT1, resulting in decreased protein stability. Deacetylated by SIRT6, preventing its degradation by the proteasome, resulting in increased protein stability. Phosphorylated by CSNK1E and CSNK1D. Phosphorylation results in PER2 protein degradation. May be dephosphorylated by PP1. In terms of processing, ubiquitinated, leading to its proteasomal degradation. Ubiquitination may be inhibited by CRY1. In terms of tissue distribution, widely expressed. Found in heart, brain, placenta, lung, liver, skeleatal muscle, kidney and pancreas. High levels in skeletal muscle and pancreas. Low levels in lung. Isoform 2 is expressed in keratinocytes (at protein level).

The protein localises to the nucleus. Its subcellular location is the cytoplasm. The protein resides in the perinuclear region. It is found in the nucleolus. In terms of biological role, transcriptional repressor which forms a core component of the circadian clock. The circadian clock, an internal time-keeping system, regulates various physiological processes through the generation of approximately 24 hour circadian rhythms in gene expression, which are translated into rhythms in metabolism and behavior. It is derived from the Latin roots 'circa' (about) and 'diem' (day) and acts as an important regulator of a wide array of physiological functions including metabolism, sleep, body temperature, blood pressure, endocrine, immune, cardiovascular, and renal function. Consists of two major components: the central clock, residing in the suprachiasmatic nucleus (SCN) of the brain, and the peripheral clocks that are present in nearly every tissue and organ system. Both the central and peripheral clocks can be reset by environmental cues, also known as Zeitgebers (German for 'timegivers'). The predominant Zeitgeber for the central clock is light, which is sensed by retina and signals directly to the SCN. The central clock entrains the peripheral clocks through neuronal and hormonal signals, body temperature and feeding-related cues, aligning all clocks with the external light/dark cycle. Circadian rhythms allow an organism to achieve temporal homeostasis with its environment at the molecular level by regulating gene expression to create a peak of protein expression once every 24 hours to control when a particular physiological process is most active with respect to the solar day. Transcription and translation of core clock components (CLOCK, NPAS2, BMAL1, BMAL2, PER1, PER2, PER3, CRY1 and CRY2) plays a critical role in rhythm generation, whereas delays imposed by post-translational modifications (PTMs) are important for determining the period (tau) of the rhythms (tau refers to the period of a rhythm and is the length, in time, of one complete cycle). A diurnal rhythm is synchronized with the day/night cycle, while the ultradian and infradian rhythms have a period shorter and longer than 24 hours, respectively. Disruptions in the circadian rhythms contribute to the pathology of cardiovascular diseases, cancer, metabolic syndrome and aging. A transcription/translation feedback loop (TTFL) forms the core of the molecular circadian clock mechanism. Transcription factors, CLOCK or NPAS2 and BMAL1 or BMAL2, form the positive limb of the feedback loop, act in the form of a heterodimer and activate the transcription of core clock genes and clock-controlled genes (involved in key metabolic processes), harboring E-box elements (5'-CACGTG-3') within their promoters. The core clock genes: PER1/2/3 and CRY1/2 which are transcriptional repressors form the negative limb of the feedback loop and interact with the CLOCK|NPAS2-BMAL1|BMAL2 heterodimer inhibiting its activity and thereby negatively regulating their own expression. This heterodimer also activates nuclear receptors NR1D1/2 and RORA/B/G, which form a second feedback loop and which activate and repress BMAL1 transcription, respectively. PER1 and PER2 proteins transport CRY1 and CRY2 into the nucleus with appropriate circadian timing, but also contribute directly to repression of clock-controlled target genes through interaction with several classes of RNA-binding proteins, helicases and others transcriptional repressors. PER appears to regulate circadian control of transcription by at least three different modes. First, interacts directly with the CLOCK-BMAL1 at the tail end of the nascent transcript peak to recruit complexes containing the SIN3-HDAC that remodel chromatin to repress transcription. Second, brings H3K9 methyltransferases such as SUV39H1 and SUV39H2 to the E-box elements of the circadian target genes, like PER2 itself or PER1. The recruitment of each repressive modifier to the DNA seems to be very precisely temporally orchestrated by the large PER complex, the deacetylases acting before than the methyltransferases. Additionally, large PER complexes are also recruited to the target genes 3' termination site through interactions with RNA-binding proteins and helicases that may play a role in transcription termination to regulate transcription independently of CLOCK-BMAL1 interactions. Recruitment of large PER complexes to the elongating polymerase at PER and CRY termination sites inhibited SETX action, impeding RNA polymerase II release and thereby repressing transcriptional reinitiation. May propagate clock information to metabolic pathways via the interaction with nuclear receptors. Coactivator of PPARA and corepressor of NR1D1, binds rhythmically at the promoter of nuclear receptors target genes like BMAL1 or G6PC1. Directly and specifically represses PPARG proadipogenic activity by blocking PPARG recruitment to target promoters and thereby inhibiting transcriptional activation. Required for fatty acid and lipid metabolism, is involved as well in the regulation of circulating insulin levels. Plays an important role in the maintenance of cardiovascular functions through the regulation of NO and vasodilatatory prostaglandins production in aortas. Controls circadian glutamate uptake in synaptic vesicles through the regulation of VGLUT1 expression. May also be involved in the regulation of inflammatory processes. Represses the CLOCK-BMAL1 induced transcription of BHLHE40/DEC1 and ATF4. Negatively regulates the formation of the TIMELESS-CRY1 complex by competing with TIMELESS for binding to CRY1. In Homo sapiens (Human), this protein is Period circadian protein homolog 2 (PER2).